The chain runs to 238 residues: Small ribosomal subunit protein uS2 (238 aa).

This sequence belongs to the universal ribosomal protein uS2 family.

This chain is Small ribosomal subunit protein uS2, found in Chloroflexus aurantiacus (strain ATCC 29366 / DSM 635 / J-10-fl).